We begin with the raw amino-acid sequence, 284 residues long: Ermin (284 aa).

The disordered stretch occupies residues 1–61; it reads MTDVPATFTQ…APTKGSQEER (61 aa). Residue Ser-73 is modified to Phosphoserine. The segment at 108-251 is disordered; it reads TFREGRQWEK…PTLGKKSDIS (144 aa). Composition is skewed to basic and acidic residues over residues 126-140 and 171-183; these read EIRR…QPLK and LHSK…KVWD. A compositionally biased stretch (acidic residues) spans 184 to 200; the sequence is EEIDDDDDDNCNDDEDE. Residues 201–220 are compositionally biased toward basic and acidic residues; that stretch reads VRVIEFKKKHEEVSQFKEEG. Phosphoserine is present on residues Ser-214, Ser-226, Ser-230, and Ser-233. Residues 225–235 show a composition bias toward low complexity; that stretch reads DSPLSSASSQA. Thr-237 carries the post-translational modification Phosphothreonine. The tract at residues 265–284 is binds actin; sequence KIRKGNTKQRIDEFESMMHL.

As to quaternary structure, binds actin.

The protein localises to the cytoplasm. It is found in the cytoskeleton. Plays a role in cytoskeletal rearrangements during the late wrapping and/or compaction phases of myelinogenesis as well as in maintenance and stability of myelin sheath in the adult. May play an important role in late-stage oligodendroglia maturation, myelin/Ranvier node formation during CNS development, and in the maintenance and plasticity of related structures in the mature CNS. The polypeptide is Ermin (ERMN) (Pongo abelii (Sumatran orangutan)).